Reading from the N-terminus, the 195-residue chain is Putative 3-methyladenine DNA glycosylase (195 aa).

The protein belongs to the DNA glycosylase MPG family.

This is Putative 3-methyladenine DNA glycosylase from Synechococcus sp. (strain JA-3-3Ab) (Cyanobacteria bacterium Yellowstone A-Prime).